The primary structure comprises 512 residues: Histidine ammonia-lyase (512 aa).

The segment at residues 144 to 146 is a cross-link (5-imidazolinone (Ala-Gly)); sequence ASG. Ser-145 bears the 2,3-didehydroalanine (Ser) mark.

Belongs to the PAL/histidase family. In terms of processing, contains an active site 4-methylidene-imidazol-5-one (MIO), which is formed autocatalytically by cyclization and dehydration of residues Ala-Ser-Gly.

The protein resides in the cytoplasm. The enzyme catalyses L-histidine = trans-urocanate + NH4(+). Its pathway is amino-acid degradation; L-histidine degradation into L-glutamate; N-formimidoyl-L-glutamate from L-histidine: step 1/3. The chain is Histidine ammonia-lyase from Desulfotalea psychrophila (strain LSv54 / DSM 12343).